The primary structure comprises 328 residues: Phosphate acyltransferase (328 aa).

The protein belongs to the PlsX family. As to quaternary structure, homodimer. Probably interacts with PlsY.

The protein resides in the cytoplasm. It catalyses the reaction a fatty acyl-[ACP] + phosphate = an acyl phosphate + holo-[ACP]. It functions in the pathway lipid metabolism; phospholipid metabolism. Catalyzes the reversible formation of acyl-phosphate (acyl-PO(4)) from acyl-[acyl-carrier-protein] (acyl-ACP). This enzyme utilizes acyl-ACP as fatty acyl donor, but not acyl-CoA. The chain is Phosphate acyltransferase from Staphylococcus aureus (strain Mu3 / ATCC 700698).